The following is a 290-amino-acid chain: Ubiquinone biosynthesis protein COQ4, mitochondrial (290 aa).

The transit peptide at 1-32 (MAKRVCVGDLRKLAGSVSTPSRCILPPHARCF) directs the protein to the mitochondrion. Residues His-168, Asp-169, His-172, and Glu-184 each coordinate Zn(2+). Residues 260-290 (KPPDLREMRKAEREAQKKDKEAKETMTRAAV) are disordered.

This sequence belongs to the COQ4 family. As to quaternary structure, component of a multi-subunit COQ enzyme complex, composed of at least COQ3, COQ4, COQ5, COQ6, COQ7 and COQ9. Zn(2+) is required as a cofactor.

The protein resides in the mitochondrion inner membrane. The enzyme catalyses a 4-hydroxy-3-methoxy-5-(all-trans-polyprenyl)benzoate + H(+) = a 2-methoxy-6-(all-trans-polyprenyl)phenol + CO2. It functions in the pathway cofactor biosynthesis; ubiquinone biosynthesis. In terms of biological role, lyase that catalyzes the C1-decarboxylation of 4-hydroxy-3-methoxy-5-(all-trans-polyprenyl)benzoic acid into 2-methoxy-6-(all-trans-polyprenyl)phenol during ubiquinone biosynthesis. This Phaeosphaeria nodorum (strain SN15 / ATCC MYA-4574 / FGSC 10173) (Glume blotch fungus) protein is Ubiquinone biosynthesis protein COQ4, mitochondrial.